An 89-amino-acid chain; its full sequence is Protein FAM25A (89 aa).

Belongs to the FAM25 family.

The polypeptide is Protein FAM25A (Homo sapiens (Human)).